A 333-amino-acid polypeptide reads, in one-letter code: Endo-1,4-beta-xylanase (333 aa).

An N-terminal signal peptide occupies residues M1–C17. The GH10 domain occupies Q18–G330. E147 serves as the catalytic Proton donor. E252 acts as the Nucleophile in catalysis.

This sequence belongs to the glycosyl hydrolase 10 (cellulase F) family.

Its subcellular location is the secreted. The enzyme catalyses Endohydrolysis of (1-&gt;4)-beta-D-xylosidic linkages in xylans.. It participates in glycan degradation; xylan degradation. In terms of biological role, has xylanase activity. Seems to be involved in the release of sugars from the hemicellulolytic fraction in the compost. This chain is Endo-1,4-beta-xylanase (xlnA), found in Agaricus bisporus (White button mushroom).